Here is a 337-residue protein sequence, read N- to C-terminus: Transaldolase (337 aa).

The short motif at M1–R10 is the Nuclear localization signal element. Catalysis depends on K142, which acts as the Schiff-base intermediate with substrate. K219 is modified (N6-acetyllysine). 2 positions are modified to phosphoserine: S237 and S256. N6-acetyllysine is present on residues K269, K286, and K321.

It belongs to the transaldolase family. Type 1 subfamily. Homodimer. Interacts with KPNA1 and KPNA4.

The protein localises to the nucleus. It is found in the cytoplasm. It catalyses the reaction D-sedoheptulose 7-phosphate + D-glyceraldehyde 3-phosphate = D-erythrose 4-phosphate + beta-D-fructose 6-phosphate. It functions in the pathway carbohydrate degradation; pentose phosphate pathway; D-glyceraldehyde 3-phosphate and beta-D-fructose 6-phosphate from D-ribose 5-phosphate and D-xylulose 5-phosphate (non-oxidative stage): step 2/3. Catalyzes the rate-limiting step of the non-oxidative phase in the pentose phosphate pathway. Catalyzes the reversible conversion of sedheptulose-7-phosphate and D-glyceraldehyde 3-phosphate into erythrose-4-phosphate and beta-D-fructose 6-phosphate. This is Transaldolase (TALDO1) from Sus scrofa (Pig).